The chain runs to 309 residues: GalNAc(5)-diNAcBac-PP-undecaprenol beta-1,3-glucosyltransferase (309 aa).

A helical membrane pass occupies residues S273–I291.

This sequence belongs to the glycosyltransferase 2 family.

The protein resides in the membrane. The catalysed reaction is [alpha-D-GalNAc-(1-&gt;4)]4-alpha-D-GalNAc-(1-&gt;3)-alpha-D-diNAcBac-tri-trans,hepta-cis-undecaprenyl diphosphate + UDP-alpha-D-glucose = [alpha-D-GalNAc-(1-&gt;4)]2-[beta-D-Glc-(1-&gt;3)]-[alpha-D-GalNAc-(1-&gt;4)]2-alpha-D-GalNAc-(1-&gt;3)-alpha-D-diNAcBac-tri-trans,hepta-cis-undecaprenyl diphosphate + UDP + H(+). Its pathway is protein modification; protein glycosylation. Glucosyltransferase that adds he final branching glucose to complete the final heptasaccharide structure in the N-linked protein glycosylation pathway. This Campylobacter jejuni subsp. jejuni serotype O:2 (strain ATCC 700819 / NCTC 11168) protein is GalNAc(5)-diNAcBac-PP-undecaprenol beta-1,3-glucosyltransferase (pglI).